A 187-amino-acid chain; its full sequence is Calmodulin-like protein 1 (187 aa).

Ala2 is subject to N-acetylalanine. EF-hand domains follow at residues 8-43 (EQIV…LGQN), 44-79 (PTEA…KLRD), 81-116 (DSEE…IGER), and 117-152 (LTDE…KKRR). The Ca(2+) site is built by Asp21, Asp23, Asp25, Ser27, Glu32, Asp57, Asp59, Asn61, Asn63, Glu68, Asp94, Asp96, Asn98, Glu105, Asp130, Asp132, Asp134, Gln136, and Glu141. Residues 153 to 187 (KRIEEKREHDGGSRTKSAGPSAAPASKRGQKCVIL) are disordered. Positions 154-165 (RIEEKREHDGGS) are enriched in basic and acidic residues. Low complexity predominate over residues 169 to 178 (SAGPSAAPAS). Cys184 is modified (cysteine methyl ester). Residue Cys184 is the site of S-farnesyl cysteine attachment. A propeptide spans 185-187 (VIL) (removed in mature form).

This sequence belongs to the calmodulin family. As to expression, expressed in roots, etiolated shoots and flowers.

The protein localises to the membrane. Functionally, calcium-binding protein that binds and activates CAMK1, a calcium/calmodulin-dependent kinase. In Oryza sativa subsp. indica (Rice), this protein is Calmodulin-like protein 1 (CML1).